Consider the following 571-residue polypeptide: Proline--tRNA ligase 1 (571 aa).

The protein belongs to the class-II aminoacyl-tRNA synthetase family. ProS type 1 subfamily. In terms of assembly, homodimer.

The protein resides in the cytoplasm. The enzyme catalyses tRNA(Pro) + L-proline + ATP = L-prolyl-tRNA(Pro) + AMP + diphosphate. In terms of biological role, catalyzes the attachment of proline to tRNA(Pro) in a two-step reaction: proline is first activated by ATP to form Pro-AMP and then transferred to the acceptor end of tRNA(Pro). As ProRS can inadvertently accommodate and process non-cognate amino acids such as alanine and cysteine, to avoid such errors it has two additional distinct editing activities against alanine. One activity is designated as 'pretransfer' editing and involves the tRNA(Pro)-independent hydrolysis of activated Ala-AMP. The other activity is designated 'posttransfer' editing and involves deacylation of mischarged Ala-tRNA(Pro). The misacylated Cys-tRNA(Pro) is not edited by ProRS. The chain is Proline--tRNA ligase 1 from Clostridioides difficile (strain 630) (Peptoclostridium difficile).